We begin with the raw amino-acid sequence, 181 residues long: ATP-dependent protease subunit HslV (181 aa).

The active site involves Thr7. 3 residues coordinate Na(+): Ala162, Cys165, and Thr168.

Belongs to the peptidase T1B family. HslV subfamily. In terms of assembly, a double ring-shaped homohexamer of HslV is capped on each side by a ring-shaped HslU homohexamer. The assembly of the HslU/HslV complex is dependent on binding of ATP.

The protein resides in the cytoplasm. The catalysed reaction is ATP-dependent cleavage of peptide bonds with broad specificity.. Allosterically activated by HslU binding. Its function is as follows. Protease subunit of a proteasome-like degradation complex believed to be a general protein degrading machinery. The sequence is that of ATP-dependent protease subunit HslV from Coxiella burnetii (strain RSA 331 / Henzerling II).